The sequence spans 607 residues: UvrABC system protein C (607 aa).

The GIY-YIG domain maps to 16–94; sequence GRPGVYRMFD…IKEWRPPYNI (79 aa). Residues 203-238 enclose the UVR domain; that stretch reads NALTDELSGAMEQAASTLDFERAAELRDQISLLRRV.

The protein belongs to the UvrC family. Interacts with UvrB in an incision complex.

It localises to the cytoplasm. Functionally, the UvrABC repair system catalyzes the recognition and processing of DNA lesions. UvrC both incises the 5' and 3' sides of the lesion. The N-terminal half is responsible for the 3' incision and the C-terminal half is responsible for the 5' incision. The sequence is that of UvrABC system protein C from Pseudomonas fluorescens (strain SBW25).